Consider the following 345-residue polypeptide: Chorismate synthase (345 aa).

It belongs to the chorismate synthase family. In terms of assembly, homotetramer. Requires FMNH2 as cofactor.

The enzyme catalyses 5-O-(1-carboxyvinyl)-3-phosphoshikimate = chorismate + phosphate. Its pathway is metabolic intermediate biosynthesis; chorismate biosynthesis; chorismate from D-erythrose 4-phosphate and phosphoenolpyruvate: step 7/7. This Carsonella ruddii (strain PV) protein is Chorismate synthase (aroC).